A 322-amino-acid polypeptide reads, in one-letter code: F-actin-capping protein subunit beta (322 aa).

It belongs to the F-actin-capping protein beta subunit family. In terms of assembly, component of the F-actin capping complex, composed of a heterodimer of an alpha and a beta subunit.

Its subcellular location is the cytoplasm. The protein localises to the cytoskeleton. The protein resides in the actin patch. F-actin-capping proteins bind in a Ca(2+)-independent manner to the fast growing ends of actin filaments (barbed end) thereby blocking the exchange of subunits at these ends. Unlike other capping proteins (such as gelsolin and severin), these proteins do not sever actin filaments. In Aspergillus fumigatus (strain ATCC MYA-4609 / CBS 101355 / FGSC A1100 / Af293) (Neosartorya fumigata), this protein is F-actin-capping protein subunit beta (cap2).